Reading from the N-terminus, the 471-residue chain is Probable ribonuclease FAU-1 (471 aa).

Belongs to the FAU-1 family.

Functionally, probable RNase involved in rRNA stability through maturation and/or degradation of precursor rRNAs. Binds to RNA in loop regions with AU-rich sequences. The sequence is that of Probable ribonuclease FAU-1 from Aeropyrum pernix (strain ATCC 700893 / DSM 11879 / JCM 9820 / NBRC 100138 / K1).